Consider the following 132-residue polypeptide: Gamma-crystallin-5 (132 aa).

Positions 1-40 (ILYEQPSYRGHQYYLWKGEYPDFQRWMGFNDSIRSCRMSP) constitute a Beta/gamma crystallin 'Greek key' 2 domain. Residues 41-45 (YHQGQ) form a connecting peptide region. 2 Beta/gamma crystallin 'Greek key' domains span residues 46–86 (YKMR…NVFD) and 87–129 (GNWM…RRVH).

This sequence belongs to the beta/gamma-crystallin family. Monomer.

In terms of biological role, crystallins are the dominant structural components of the vertebrate eye lens. The polypeptide is Gamma-crystallin-5 (cryg5) (Xenopus laevis (African clawed frog)).